Consider the following 1368-residue polypeptide: DNA-directed RNA polymerase subunit beta (1368 aa).

The protein belongs to the RNA polymerase beta chain family. In terms of assembly, the RNAP catalytic core consists of 2 alpha, 1 beta, 1 beta' and 1 omega subunit. When a sigma factor is associated with the core the holoenzyme is formed, which can initiate transcription.

The catalysed reaction is RNA(n) + a ribonucleoside 5'-triphosphate = RNA(n+1) + diphosphate. In terms of biological role, DNA-dependent RNA polymerase catalyzes the transcription of DNA into RNA using the four ribonucleoside triphosphates as substrates. This chain is DNA-directed RNA polymerase subunit beta, found in Syntrophotalea carbinolica (strain DSM 2380 / NBRC 103641 / GraBd1) (Pelobacter carbinolicus).